The chain runs to 426 residues: MKKPIYKVLYVQVIVAIIIGIALGHFYPALATDMKPLGDAFIKLIKMVIGPIIFCTVVTGIAGMEDMKKVGRVGGKALLYFEIVSTFALILGLAATHLLRPGVGFNVDPATLNGKEVASYAAKAHGQTTVDFLMHIIPDTLVSAFSQGEILQILLIALLFGAVLAHVGERGKPVTNFIESLSSILFGMVGIITKLAPIGAFGAMAFTIGKYGIGSLLPMLKLIGTFYLTSIVFVVVVLGFIAKMVGFNILRFVAYIKEEMLIVLGTSSSEAALPQLMLKLEKLGCSRSVVGLVVPTGYSFNLDGTNIYMTMAVLFIAQATNTDLTWGQQLTLLAVTMLTSKGASGVTGAGFITLAATLAVVPTIPLSGMVLILGIDRFMSECRALTNIVGNGVATVVVSAWEKELDRSKLRAALSRDVSVTESAEV.

The next 8 membrane-spanning stretches (helical) occupy residues valine 8–proline 28, leucine 44–methionine 64, leucine 78–leucine 98, glycine 148–glycine 168, isoleucine 184–methionine 204, leucine 222–alanine 242, glycine 297–alanine 317, and alanine 355–isoleucine 375.

Belongs to the dicarboxylate/amino acid:cation symporter (DAACS) (TC 2.A.23) family.

The protein resides in the cell inner membrane. Responsible for the transport of dicarboxylates such as succinate, fumarate, and malate from the periplasm across the membrane. The sequence is that of C4-dicarboxylate transport protein from Paraburkholderia phymatum (strain DSM 17167 / CIP 108236 / LMG 21445 / STM815) (Burkholderia phymatum).